Here is a 500-residue protein sequence, read N- to C-terminus: Archaeal-type glutamate synthase [NADPH] (500 aa).

2 4Fe-4S ferredoxin-type domains span residues 7–38 and 40–69; these read SKFI…YDED and DQIK…VRNN. [4Fe-4S] cluster-binding residues include Cys18, Cys21, Cys24, Cys28, Cys49, Cys52, Cys55, and Cys59.

This sequence belongs to the glutamate synthase family. Requires FMN as cofactor.

It catalyses the reaction 2 L-glutamate + NADP(+) = L-glutamine + 2-oxoglutarate + NADPH + H(+). This is Archaeal-type glutamate synthase [NADPH] from Dehalococcoides mccartyi (strain ATCC BAA-2266 / KCTC 15142 / 195) (Dehalococcoides ethenogenes (strain 195)).